The sequence spans 606 residues: Elongation factor 4 (606 aa).

Residues 7 to 189 (SRIRNFCIIA…AVVDRVPPPK (183 aa)) form the tr-type G domain. GTP contacts are provided by residues 19–24 (DHGKST) and 136–139 (NKID).

Belongs to the TRAFAC class translation factor GTPase superfamily. Classic translation factor GTPase family. LepA subfamily.

The protein localises to the cell inner membrane. It catalyses the reaction GTP + H2O = GDP + phosphate + H(+). In terms of biological role, required for accurate and efficient protein synthesis under certain stress conditions. May act as a fidelity factor of the translation reaction, by catalyzing a one-codon backward translocation of tRNAs on improperly translocated ribosomes. Back-translocation proceeds from a post-translocation (POST) complex to a pre-translocation (PRE) complex, thus giving elongation factor G a second chance to translocate the tRNAs correctly. Binds to ribosomes in a GTP-dependent manner. This is Elongation factor 4 from Synechococcus sp. (strain CC9605).